Reading from the N-terminus, the 29-residue chain is Trypsin inhibitor 3 (29 aa).

3 cysteine pairs are disulfide-bonded: C3–C20, C10–C22, and C16–C28.

This sequence belongs to the protease inhibitor I7 (squash-type serine protease inhibitor) family.

Its subcellular location is the secreted. In terms of biological role, inhibits trypsin. In Luffa aegyptiaca (Sponge gourd), this protein is Trypsin inhibitor 3.